We begin with the raw amino-acid sequence, 240 residues long: Small ribosomal subunit protein uS3 (240 aa).

Residues 39 to 109 (IRQYVEKNLS…QIRINVVEVA (71 aa)) enclose the KH type-2 domain. The segment at 214–240 (EEQAPAQPATTPKRQRRRQQFEDRSNE) is disordered.

The protein belongs to the universal ribosomal protein uS3 family. As to quaternary structure, part of the 30S ribosomal subunit. Forms a tight complex with proteins S10 and S14.

Functionally, binds the lower part of the 30S subunit head. Binds mRNA in the 70S ribosome, positioning it for translation. The protein is Small ribosomal subunit protein uS3 of Gloeothece citriformis (strain PCC 7424) (Cyanothece sp. (strain PCC 7424)).